We begin with the raw amino-acid sequence, 196 residues long: Elongation factor Ts (196 aa).

Positions 80–83 are involved in Mg(2+) ion dislocation from EF-Tu; sequence TDFV.

This sequence belongs to the EF-Ts family.

It localises to the cytoplasm. In terms of biological role, associates with the EF-Tu.GDP complex and induces the exchange of GDP to GTP. It remains bound to the aminoacyl-tRNA.EF-Tu.GTP complex up to the GTP hydrolysis stage on the ribosome. The sequence is that of Elongation factor Ts from Desulfotalea psychrophila (strain LSv54 / DSM 12343).